The primary structure comprises 139 residues: Small ribosomal subunit protein uS19 (139 aa).

The protein belongs to the universal ribosomal protein uS19 family.

Protein S19 forms a complex with S13 that binds strongly to the 16S ribosomal RNA. In Methanoregula boonei (strain DSM 21154 / JCM 14090 / 6A8), this protein is Small ribosomal subunit protein uS19.